The following is a 401-amino-acid chain: Enolase (401 aa).

Position 154 (Gln154) interacts with (2R)-2-phosphoglycerate. The active-site Proton donor is Glu196. Positions 232, 275, and 302 each coordinate Mg(2+). 4 residues coordinate (2R)-2-phosphoglycerate: Lys327, Arg356, Ser357, and Lys378. The active-site Proton acceptor is the Lys327.

The protein belongs to the enolase family. The cofactor is Mg(2+).

It localises to the cytoplasm. Its subcellular location is the secreted. It is found in the cell surface. The catalysed reaction is (2R)-2-phosphoglycerate = phosphoenolpyruvate + H2O. The protein operates within carbohydrate degradation; glycolysis; pyruvate from D-glyceraldehyde 3-phosphate: step 4/5. Functionally, catalyzes the reversible conversion of 2-phosphoglycerate (2-PG) into phosphoenolpyruvate (PEP). It is essential for the degradation of carbohydrates via glycolysis. In Haloquadratum walsbyi (strain DSM 16790 / HBSQ001), this protein is Enolase.